Consider the following 495-residue polypeptide: B3 domain-containing protein Os01g0234100 (495 aa).

2 disordered regions span residues 1 to 25 (MAID…KMEQ) and 88 to 108 (PGIP…NTTE). The span at 92–108 (QTCNTQNTSNGRTNTTE) shows a compositional bias: polar residues. The TF-B3 DNA-binding region spans 152 to 243 (FVKHMLHSHV…KFKVHIIRDK (92 aa)). The segment covering 268–282 (EATDNATKPKEDPET) has biased composition (basic and acidic residues). Residues 268–289 (EATDNATKPKEDPETTRVSSKV) are disordered.

It localises to the nucleus. The polypeptide is B3 domain-containing protein Os01g0234100 (Oryza sativa subsp. japonica (Rice)).